The following is a 135-amino-acid chain: Large ribosomal subunit protein uL16m (135 aa).

This sequence belongs to the universal ribosomal protein uL16 family.

It localises to the mitochondrion. In Marchantia polymorpha (Common liverwort), this protein is Large ribosomal subunit protein uL16m (RPL16).